We begin with the raw amino-acid sequence, 399 residues long: 4-hydroxy-3-methylbut-2-enyl diphosphate reductase (399 aa).

Cys66 provides a ligand contact to [4Fe-4S] cluster. His96 contributes to the (2E)-4-hydroxy-3-methylbut-2-enyl diphosphate binding site. His96 lines the dimethylallyl diphosphate pocket. His96 contacts isopentenyl diphosphate. Cys157 provides a ligand contact to [4Fe-4S] cluster. His185 is a binding site for (2E)-4-hydroxy-3-methylbut-2-enyl diphosphate. Position 185 (His185) interacts with dimethylallyl diphosphate. Residue His185 participates in isopentenyl diphosphate binding. Residue Glu187 is the Proton donor of the active site. Thr250 is a (2E)-4-hydroxy-3-methylbut-2-enyl diphosphate binding site. Cys288 provides a ligand contact to [4Fe-4S] cluster. Ser317, Ser318, Asn319, and Ser380 together coordinate (2E)-4-hydroxy-3-methylbut-2-enyl diphosphate. Ser317, Ser318, Asn319, and Ser380 together coordinate dimethylallyl diphosphate. 4 residues coordinate isopentenyl diphosphate: Ser317, Ser318, Asn319, and Ser380.

The protein belongs to the IspH family. It depends on [4Fe-4S] cluster as a cofactor.

It catalyses the reaction isopentenyl diphosphate + 2 oxidized [2Fe-2S]-[ferredoxin] + H2O = (2E)-4-hydroxy-3-methylbut-2-enyl diphosphate + 2 reduced [2Fe-2S]-[ferredoxin] + 2 H(+). The catalysed reaction is dimethylallyl diphosphate + 2 oxidized [2Fe-2S]-[ferredoxin] + H2O = (2E)-4-hydroxy-3-methylbut-2-enyl diphosphate + 2 reduced [2Fe-2S]-[ferredoxin] + 2 H(+). The protein operates within isoprenoid biosynthesis; dimethylallyl diphosphate biosynthesis; dimethylallyl diphosphate from (2E)-4-hydroxy-3-methylbutenyl diphosphate: step 1/1. Its pathway is isoprenoid biosynthesis; isopentenyl diphosphate biosynthesis via DXP pathway; isopentenyl diphosphate from 1-deoxy-D-xylulose 5-phosphate: step 6/6. Catalyzes the conversion of 1-hydroxy-2-methyl-2-(E)-butenyl 4-diphosphate (HMBPP) into a mixture of isopentenyl diphosphate (IPP) and dimethylallyl diphosphate (DMAPP). Acts in the terminal step of the DOXP/MEP pathway for isoprenoid precursor biosynthesis. In Parasynechococcus marenigrum (strain WH8102), this protein is 4-hydroxy-3-methylbut-2-enyl diphosphate reductase.